A 91-amino-acid chain; its full sequence is UPF0213 protein NGO_1598 (91 aa).

The 80-residue stretch at 4–83 (SNWSVYLILC…AAQKRQLWEQ (80 aa)) folds into the GIY-YIG domain.

Belongs to the UPF0213 family.

The polypeptide is UPF0213 protein NGO_1598 (Neisseria gonorrhoeae (strain ATCC 700825 / FA 1090)).